A 133-amino-acid polypeptide reads, in one-letter code: Small ribosomal subunit protein uS9 (133 aa).

This sequence belongs to the universal ribosomal protein uS9 family.

The protein is Small ribosomal subunit protein uS9 of Ureaplasma parvum serovar 3 (strain ATCC 700970).